Reading from the N-terminus, the 506-residue chain is Maturase K (506 aa).

It belongs to the intron maturase 2 family. MatK subfamily.

It is found in the plastid. Its subcellular location is the chloroplast. Usually encoded in the trnK tRNA gene intron. Probably assists in splicing its own and other chloroplast group II introns. In Rhododendron hippophaeoides (Rhododendron), this protein is Maturase K.